The chain runs to 318 residues: Ankyrin repeat domain-containing protein 1 (318 aa).

Positions 37 to 77 (ALEKQEDLKTTSKSLIELEEEKQIKEKQLKSELLKKKLEER) form a coiled coil. ANK repeat units lie at residues 118 to 147 (VDQT…DPNT), 151 to 180 (YKRT…NIEF), 184 to 213 (LEST…AINA), 217 to 246 (LLST…DLHA), 250 to 279 (EGDT…DLNI), and 283 to 314 (AGKT…KNSH).

It localises to the nucleus. Its function is as follows. May act as a nuclear transcription factor that negatively regulates the expression of cardiac genes. The chain is Ankyrin repeat domain-containing protein 1 (ankrd1) from Xenopus tropicalis (Western clawed frog).